A 109-amino-acid polypeptide reads, in one-letter code: Large ribosomal subunit protein uL22 (109 aa).

This sequence belongs to the universal ribosomal protein uL22 family. Part of the 50S ribosomal subunit.

Functionally, this protein binds specifically to 23S rRNA; its binding is stimulated by other ribosomal proteins, e.g. L4, L17, and L20. It is important during the early stages of 50S assembly. It makes multiple contacts with different domains of the 23S rRNA in the assembled 50S subunit and ribosome. Its function is as follows. The globular domain of the protein is located near the polypeptide exit tunnel on the outside of the subunit, while an extended beta-hairpin is found that lines the wall of the exit tunnel in the center of the 70S ribosome. The chain is Large ribosomal subunit protein uL22 from Paraburkholderia phymatum (strain DSM 17167 / CIP 108236 / LMG 21445 / STM815) (Burkholderia phymatum).